A 511-amino-acid polypeptide reads, in one-letter code: Sorting nexin MVP1 (511 aa).

The interval 1-36 (MDNYEGSDPWNTSSNAWTKDDDHVVSTTNSEPSLNG) is disordered. The span at 25 to 36 (VSTTNSEPSLNG) shows a compositional bias: polar residues. Positions 128 to 247 (DADIIIIEEI…TFLTVRTDLT (120 aa)) constitute a PX domain. A 1,2-diacyl-sn-glycero-3-phospho-(1D-myo-inositol-3-phosphate)-binding residues include Arg172, Ser174, Lys198, and Arg213.

Belongs to the sorting nexin family. As to quaternary structure, homodimer. Forms an autoinhibited tetramer consisting of 2 homodimers that self-interact, wherein the membrane-interacting BAR surfaces are sequestered and the PX lipid-binding sites are occluded. Interacts with VPS1.

The protein localises to the cytoplasm. The protein resides in the endosome membrane. Required for vacuolar protein sorting. Component of the retromer-mediated endosome-to-Golgi retrograde pathway. Required for efficient cargo export from the endosome, promoting VPS1-mediated fission of retromer-coated tubules that bud from the endosome. This chain is Sorting nexin MVP1 (MVP1), found in Saccharomyces cerevisiae (strain ATCC 204508 / S288c) (Baker's yeast).